A 372-amino-acid polypeptide reads, in one-letter code: Cobalt-precorrin-5B C(1)-methyltransferase (372 aa).

Belongs to the CbiD family.

It catalyses the reaction Co-precorrin-5B + S-adenosyl-L-methionine = Co-precorrin-6A + S-adenosyl-L-homocysteine. It participates in cofactor biosynthesis; adenosylcobalamin biosynthesis; cob(II)yrinate a,c-diamide from sirohydrochlorin (anaerobic route): step 6/10. Catalyzes the methylation of C-1 in cobalt-precorrin-5B to form cobalt-precorrin-6A. This is Cobalt-precorrin-5B C(1)-methyltransferase from Geobacillus kaustophilus (strain HTA426).